The following is a 222-amino-acid chain: 7-cyano-7-deazaguanine synthase (222 aa).

Position 14 to 24 (14 to 24) interacts with ATP; sequence FSGGQDSTTCL. Zn(2+)-binding residues include cysteine 190, cysteine 199, cysteine 202, and cysteine 205.

It belongs to the QueC family. As to quaternary structure, homodimer. Zn(2+) is required as a cofactor.

The catalysed reaction is 7-carboxy-7-deazaguanine + NH4(+) + ATP = 7-cyano-7-deazaguanine + ADP + phosphate + H2O + H(+). It functions in the pathway purine metabolism; 7-cyano-7-deazaguanine biosynthesis. Catalyzes the ATP-dependent conversion of 7-carboxy-7-deazaguanine (CDG) to 7-cyano-7-deazaguanine (preQ(0)). In Staphylococcus aureus (strain Mu3 / ATCC 700698), this protein is 7-cyano-7-deazaguanine synthase.